The sequence spans 134 residues: UPF0412 protein YaaI (134 aa).

A signal peptide spans 1-23 (MKSVITISASLAISLMLCCTAQA).

Belongs to the UPF0412 family.

The chain is UPF0412 protein YaaI from Escherichia coli (strain UTI89 / UPEC).